The sequence spans 427 residues: C4-dicarboxylate TRAP transporter large permease protein DctM (427 aa).

Transmembrane regions (helical) follow at residues 2–22 (TILF…PIAV), 55–75 (TLLA…GGVA), 91–111 (GGLA…SGSS), 115–135 (VAAV…PQAF), 138–158 (GIVC…VMVV), 171–191 (FIAG…VIYI), 216–236 (ALWG…GAFT), 237–257 (PTEA…FVYR), 274–294 (LTIM…VLTT), 310–330 (LSPW…GNFM), 335–355 (IILI…IDPI), 359–379 (IIMV…LNLF), and 396–416 (ALPW…IPAV).

It belongs to the TRAP transporter large permease family. The complex comprises the extracytoplasmic solute receptor protein DctP, and the two transmembrane proteins DctQ and DctM.

Its subcellular location is the cell inner membrane. Part of the tripartite ATP-independent periplasmic (TRAP) transport system DctPQM involved in C4-dicarboxylates uptake. The sequence is that of C4-dicarboxylate TRAP transporter large permease protein DctM from Pseudomonas aeruginosa (strain ATCC 15692 / DSM 22644 / CIP 104116 / JCM 14847 / LMG 12228 / 1C / PRS 101 / PAO1).